The primary structure comprises 334 residues: Holliday junction branch migration complex subunit RuvB (334 aa).

Residues 4–184 (ADRLIQPQIQ…FGIPLRLEFY (181 aa)) form a large ATPase domain (RuvB-L) region. Residues Arg24, Gly65, Lys68, Thr69, Thr70, 131–133 (EDY), Arg174, Tyr184, and Arg221 each bind ATP. Thr69 contacts Mg(2+). The tract at residues 185–255 (NIKDLSTIVT…VAEHALDLLD (71 aa)) is small ATPAse domain (RuvB-S). The tract at residues 258–334 (SEGFDYMDRK…YQHFELIKPE (77 aa)) is head domain (RuvB-H). Residues Arg294, Arg313, and Arg318 each coordinate DNA.

It belongs to the RuvB family. In terms of assembly, homohexamer. Forms an RuvA(8)-RuvB(12)-Holliday junction (HJ) complex. HJ DNA is sandwiched between 2 RuvA tetramers; dsDNA enters through RuvA and exits via RuvB. An RuvB hexamer assembles on each DNA strand where it exits the tetramer. Each RuvB hexamer is contacted by two RuvA subunits (via domain III) on 2 adjacent RuvB subunits; this complex drives branch migration. In the full resolvosome a probable DNA-RuvA(4)-RuvB(12)-RuvC(2) complex forms which resolves the HJ.

The protein resides in the cytoplasm. The enzyme catalyses ATP + H2O = ADP + phosphate + H(+). The RuvA-RuvB-RuvC complex processes Holliday junction (HJ) DNA during genetic recombination and DNA repair, while the RuvA-RuvB complex plays an important role in the rescue of blocked DNA replication forks via replication fork reversal (RFR). RuvA specifically binds to HJ cruciform DNA, conferring on it an open structure. The RuvB hexamer acts as an ATP-dependent pump, pulling dsDNA into and through the RuvAB complex. RuvB forms 2 homohexamers on either side of HJ DNA bound by 1 or 2 RuvA tetramers; 4 subunits per hexamer contact DNA at a time. Coordinated motions by a converter formed by DNA-disengaged RuvB subunits stimulates ATP hydrolysis and nucleotide exchange. Immobilization of the converter enables RuvB to convert the ATP-contained energy into a lever motion, pulling 2 nucleotides of DNA out of the RuvA tetramer per ATP hydrolyzed, thus driving DNA branch migration. The RuvB motors rotate together with the DNA substrate, which together with the progressing nucleotide cycle form the mechanistic basis for DNA recombination by continuous HJ branch migration. Branch migration allows RuvC to scan DNA until it finds its consensus sequence, where it cleaves and resolves cruciform DNA. This chain is Holliday junction branch migration complex subunit RuvB, found in Shewanella baltica (strain OS155 / ATCC BAA-1091).